Consider the following 483-residue polypeptide: ATP synthase subunit beta (483 aa).

Residue 169–176 (GGAGVGKT) coordinates ATP.

Belongs to the ATPase alpha/beta chains family. In terms of assembly, F-type ATPases have 2 components, CF(1) - the catalytic core - and CF(0) - the membrane proton channel. CF(1) has five subunits: alpha(3), beta(3), gamma(1), delta(1), epsilon(1). CF(0) has three main subunits: a(1), b(2) and c(9-12). The alpha and beta chains form an alternating ring which encloses part of the gamma chain. CF(1) is attached to CF(0) by a central stalk formed by the gamma and epsilon chains, while a peripheral stalk is formed by the delta and b chains.

The protein localises to the cell membrane. The catalysed reaction is ATP + H2O + 4 H(+)(in) = ADP + phosphate + 5 H(+)(out). Functionally, produces ATP from ADP in the presence of a proton gradient across the membrane. The catalytic sites are hosted primarily by the beta subunits. The protein is ATP synthase subunit beta of Rhodococcus jostii (strain RHA1).